Consider the following 265-residue polypeptide: Putative cysteine-rich receptor-like protein kinase At4g11521 (265 aa).

A signal peptide spans Met1–Thr23. Gnk2-homologous domains are found at residues Gln24–Phe122 and Met128–Phe241. N-linked (GlcNAc...) asparagine glycans are attached at residues Asn34, Asn102, and Asn119. N-linked (GlcNAc...) asparagine glycosylation occurs at Asn247.

It belongs to the protein kinase superfamily. Ser/Thr protein kinase family. CRK subfamily.

It is found in the secreted. This is Putative cysteine-rich receptor-like protein kinase At4g11521 from Arabidopsis thaliana (Mouse-ear cress).